Here is a 355-residue protein sequence, read N- to C-terminus: Anthocyanin synthase (355 aa).

Substrate is bound by residues Y145 and K216. Positions 211-310 (LLLQMKINYY…RISWAVFCEP (100 aa)) constitute a Fe2OG dioxygenase domain. Position 218-220 (218-220 (NYY)) interacts with 2-oxoglutarate. H235 serves as a coordination point for Fe cation. Residue T236 coordinates substrate. Fe cation is bound by residues D237 and H291. Residues R301 and 301 to 303 (RIS) each bind 2-oxoglutarate. Substrate is bound by residues E309 and K344.

This sequence belongs to the iron/ascorbate-dependent oxidoreductase family. The cofactor is L-ascorbate. It depends on Fe(2+) as a cofactor. Expressed in stems and leaves. Expressed at low levels in ovaries.

It carries out the reaction a (2R,3S,4S)-leucoanthocyanidin + 2-oxoglutarate + O2 = a 4-H-anthocyanidin with a 3-hydroxy group + succinate + CO2 + 2 H2O. It functions in the pathway pigment biosynthesis; anthocyanin biosynthesis. Functionally, involved in anthocyanin biosynthesis by catalyzing the oxidation of leucoanthocyanidins into anthocyanidins. Required for the accumulation of anthocyanin in red-fleshed kiwifruit varieties. The sequence is that of Anthocyanin synthase from Actinidia chinensis var. chinensis (Chinese soft-hair kiwi).